A 370-amino-acid chain; its full sequence is Cytochrome b (370 aa).

4 helical membrane passes run 25–45 (FGSMLIACSTLQVLTGFFLAV), 69–90 (WLMQNLHAIGASMFFICIYIHI), 105–125 (WLSGTTLLIMLMATAFFGYVL), and 170–190 (FFALHFILPFGIISMSSLHVM). 2 residues coordinate heme b: His75 and His89. 2 residues coordinate heme b: His174 and His188. His193 provides a ligand contact to a ubiquinone. The next 4 membrane-spanning stretches (helical) occupy residues 218 to 238 (YKDLLMLAAMTTLLLLIVSFS), 280 to 300 (LGGALALTMSIVILLTVPFTH), 312 to 332 (FMQMTFWLFAATFMVITWTAT), and 339 to 358 (FTLIGQAASMIYFLFFISNP).

The protein belongs to the cytochrome b family. In terms of assembly, the cytochrome bc1 complex contains 3 respiratory subunits (MT-CYB, CYC1 and UQCRFS1), 2 core proteins (UQCRC1 and UQCRC2) and probably 6 low-molecular weight proteins. The cofactor is heme b.

It localises to the mitochondrion inner membrane. Component of the ubiquinol-cytochrome c reductase complex (complex III or cytochrome b-c1 complex) that is part of the mitochondrial respiratory chain. The b-c1 complex mediates electron transfer from ubiquinol to cytochrome c. Contributes to the generation of a proton gradient across the mitochondrial membrane that is then used for ATP synthesis. The polypeptide is Cytochrome b (MT-CYB) (Eunectes notaeus (Yellow anaconda)).